Here is a 548-residue protein sequence, read N- to C-terminus: Thermostable neutral protease NprT (548 aa).

The signal sequence occupies residues 1 to 25 (MNKRAMLGAIGLAFGLLAAPIGASA). A propeptide spans 26–229 (KGESIVWNEQ…DSRQPGGGQP (204 aa)) (activation peptide). Ca(2+) is bound by residues Asp-289, Asp-291, Gln-293, and Asp-370. His-374 is a binding site for Zn(2+). Glu-375 is a catalytic residue. Residues His-378 and Glu-398 each coordinate Zn(2+). The Ca(2+) site is built by Glu-409, Asn-415, Asp-417, Glu-419, Glu-422, Tyr-425, Thr-426, Val-429, and Asp-432. His-463 functions as the Proton donor in the catalytic mechanism.

Belongs to the peptidase M4 family. Requires Ca(2+) as cofactor. It depends on Zn(2+) as a cofactor.

The protein resides in the secreted. Its activity is regulated as follows. Its casein hydrolytic activity is inhibited almost completely by a chelating agent (EDTA), whereas neither diisopropyl fluorophosphate nor phenylmethylsulfonyl fluoride inhibit the proteolytic activity in vitro. Extracellular zinc metalloprotease. The sequence is that of Thermostable neutral protease NprT (nprT) from Geobacillus stearothermophilus (Bacillus stearothermophilus).